A 405-amino-acid chain; its full sequence is L-rhamnonate dehydratase (405 aa).

Substrate is bound by residues His-33 and Arg-59. Asp-226, Glu-252, and Glu-280 together coordinate Mg(2+). His-329 (proton acceptor) is an active-site residue. Glu-349 contributes to the substrate binding site.

The protein belongs to the mandelate racemase/muconate lactonizing enzyme family. RhamD subfamily. Homooctamer; tetramer of dimers. Mg(2+) serves as cofactor.

It catalyses the reaction L-rhamnonate = 2-dehydro-3-deoxy-L-rhamnonate + H2O. Functionally, catalyzes the dehydration of L-rhamnonate to 2-keto-3-deoxy-L-rhamnonate (KDR). The polypeptide is L-rhamnonate dehydratase (Escherichia coli O9:H4 (strain HS)).